We begin with the raw amino-acid sequence, 220 residues long: UPF0758 protein APL_1970 (220 aa).

In terms of domain architecture, MPN spans 98–220 (NINEPYLAVM…YFSFEEEKFR (123 aa)). 3 residues coordinate Zn(2+): His169, His171, and Asp182. A JAMM motif motif is present at residues 169-182 (HNHPSGNCTPSESD).

This sequence belongs to the UPF0758 family.

In Actinobacillus pleuropneumoniae serotype 5b (strain L20), this protein is UPF0758 protein APL_1970.